We begin with the raw amino-acid sequence, 573 residues long: Developmental and secondary metabolism regulator VEL1 (573 aa).

A Velvet domain is found at asparagine 26–arginine 220. The Nuclear localization signal motif lies at glutamate 40–cysteine 45. Residues aspartate 222–histidine 520 are disordered. Basic and acidic residues predominate over residues glycine 230–arginine 245. Composition is skewed to pro residues over residues alanine 291–alanine 310 and alanine 341–proline 351. Residues tyrosine 352–alanine 363 are compositionally biased toward low complexity. Residues proline 379 to proline 389 are compositionally biased toward pro residues. Polar residues predominate over residues threonine 432 to tyrosine 448. Over residues serine 458–proline 475 the composition is skewed to pro residues. Residues serine 476–leucine 504 form a PEST region.

The protein belongs to the velvet family. VeA subfamily. In terms of assembly, component of the heterotrimeric velvet complex composed of LAE1, VEL1 and VEL2; VEL1 acting as a bridging protein between LAE1 and VEL2. Interacts with LAE1.

The protein resides in the nucleus. It localises to the cytoplasm. In terms of biological role, component of the velvet transcription factor complex that controls sexual/asexual developmental ratio in response to light, promoting sexual development in the darkness while stimulating asexual sporulation under illumination. The velvet complex hat acts as a global regulator for secondary metabolite gene expression. Regulates expression of the carbohydrate-active enzyme gene clusters. This is Developmental and secondary metabolism regulator VEL1 from Hypocrea jecorina (strain QM6a) (Trichoderma reesei).